Reading from the N-terminus, the 550-residue chain is Sterol O-acyltransferase 1 (550 aa).

An N-acetylmethionine modification is found at methionine 1. The tract at residues 1–36 (MVGEEKMSLRNRLSKSRENPEEDEDQRKPAKESLEA) is disordered. Topologically, residues 1-138 (MVGEEKMSLR…LDELLEVDHI (138 aa)) are cytoplasmic. The residue at position 8 (serine 8) is a Phosphoserine. Positions 15–34 (KSRENPEEDEDQRKPAKESL) are enriched in basic and acidic residues. Histidine 137 is a binding site for cholesterol. A helical membrane pass occupies residues 139 to 160 (RTIYHMFIALLILFILSTLVVD). The Lumenal segment spans residues 161–180 (YIDEGRLVLEFSLLSYAFGK). Residues 181–206 (FPTVVWTWWIMFLSTFSVPYFLFQRW) form a helical membrane-spanning segment. The Cytoplasmic portion of the chain corresponds to 207 to 218 (ATGYSKSSHPLI). The chain crosses the membrane as a helical span at residues 219-244 (NSLFHGFLFMVFQIGILGFGPTYVVL). Residues 245–252 (AYTLPPAS) are Lumenal-facing. Residues 253–276 (RFIIIFEQIRFVMKAHSFVRENVP) form a helical membrane-spanning segment. Over 277 to 319 (RVLNSAKEKSSTVPIPTVNQYLYFLFAPTLIYRDSYPRNPTVR) the chain is Cytoplasmic. The chain crosses the membrane as a helical span at residues 320–352 (WGYVAMQFAQVFGCFFYVYYIFERLCAPLFRNI). Residues 353-369 (KQEPFSARVLVLCVFNS) are Lumenal-facing. The helical transmembrane segment at 370 to 395 (ILPGVLILFLTFFAFLHCWLNAFAEM) threads the bilayer. The Cytoplasmic portion of the chain corresponds to 396 to 443 (LRFGDRMFYKDWWNSTSYSNYYRTWNVVVHDWLYYYAYKDFLWFFSKR). The short motif at 403–409 (FYKDWWN) is the FYXDWWN motif element. The an acyl-CoA site is built by asparagine 415, arginine 418, asparagine 421, histidine 425, tyrosine 433, lysine 445, and serine 456. Residues 444–468 (FKSAAMLAAFAVSAVVHEYALAVCL) form a helical membrane-spanning segment. Histidine 460 is a catalytic residue. Topologically, residues 469–474 (SFFYPV) are lumenal. The helical transmembrane segment at 475-490 (LFVLFMFFGMAFNFIV) threads the bilayer. The Cytoplasmic segment spans residues 491–496 (NDSRKK). Residues 497-528 (PIWNVMMWTSLFLGNGVLLCFYSQEWYARQHC) form a helical membrane-spanning segment. Cysteines 528 and 546 form a disulfide. Topologically, residues 529-550 (PLKNPTFLDYVRPRSWTCRYVF) are lumenal.

It belongs to the membrane-bound acyltransferase family. Sterol o-acyltransferase subfamily. As to quaternary structure, may form homo- or heterodimers. Interacts with UBIAD1. In terms of tissue distribution, expressed in most tissues, but most strongly in the adrenal gland. Expressed more strongly in liver Kupffer cells than in hepatocytes.

The protein localises to the endoplasmic reticulum membrane. It carries out the reaction a sterol + a long-chain fatty acyl-CoA = a long-chain 3-hydroxysterol ester + CoA. It catalyses the reaction cholesterol + an acyl-CoA = a cholesterol ester + CoA. The catalysed reaction is cholesterol + (9Z)-octadecenoyl-CoA = cholesteryl (9Z-octadecenoate) + CoA. The enzyme catalyses cholesterol + hexadecanoyl-CoA = cholesteryl hexadecanoate + CoA. It carries out the reaction octadecanoyl-CoA + cholesterol = cholesteryl octadecanoate + CoA. It catalyses the reaction (9Z,12Z)-octadecadienoyl-CoA + cholesterol = cholesteryl (9Z,12Z)-octadecadienoate + CoA. The catalysed reaction is (5Z,8Z,11Z,14Z)-eicosatetraenoyl-CoA + cholesterol = cholesteryl (5Z,8Z,11Z,14Z)-eicosatetraenoate + CoA. The enzyme catalyses (9Z)-hexadecenoyl-CoA + cholesterol = cholesteryl (9Z)-hexadecenoate + CoA. It carries out the reaction (11Z)-octadecenoyl-CoA + cholesterol = cholesteryl (11Z)-octadecenoate + CoA. It catalyses the reaction (7Z)-octadecenoyl-CoA + cholesterol = cholesteryl (7Z)-octadecenoate + CoA. Functionally, catalyzes the formation of fatty acid-cholesterol esters, which are less soluble in membranes than cholesterol. Plays a role in lipoprotein assembly and dietary cholesterol absorption. Preferentially utilizes oleoyl-CoA ((9Z)-octadecenoyl-CoA) as a substrate: shows a higher activity towards an acyl-CoA substrate with a double bond at the delta-9 position (9Z) than towards saturated acyl-CoA or an unsaturated acyl-CoA with a double bond at the delta-7 (7Z) or delta-11 (11Z) positions. This Macaca fascicularis (Crab-eating macaque) protein is Sterol O-acyltransferase 1 (SOAT1).